Here is a 186-residue protein sequence, read N- to C-terminus: Ribosome-recycling factor (186 aa).

The tract at residues 135 to 162 (DGMDGLKKAEKDGDIGQDESRAQSERVQ) is disordered.

This sequence belongs to the RRF family.

It localises to the cytoplasm. Its function is as follows. Responsible for the release of ribosomes from messenger RNA at the termination of protein biosynthesis. May increase the efficiency of translation by recycling ribosomes from one round of translation to another. The chain is Ribosome-recycling factor from Sinorhizobium fredii (strain NBRC 101917 / NGR234).